A 260-amino-acid polypeptide reads, in one-letter code: Cytochrome c oxidase subunit 3 (260 aa).

6 consecutive transmembrane segments (helical) span residues 41 to 61, 81 to 101, 133 to 153, 161 to 181, 196 to 216, and 238 to 258; these read LTLV…RDII, GMIL…WAFF, TGVL…ILAG, ALFL…WEYI, FFVA…FLMV, and AWYW…IYWW.

The protein belongs to the cytochrome c oxidase subunit 3 family. Component of the cytochrome c oxidase (complex IV, CIV), a multisubunit enzyme composed of a catalytic core of 3 subunits and several supernumerary subunits. The complex exists as a monomer or a dimer and forms supercomplexes (SCs) in the inner mitochondrial membrane with ubiquinol-cytochrome c oxidoreductase (cytochrome b-c1 complex, complex III, CIII).

Its subcellular location is the mitochondrion inner membrane. The catalysed reaction is 4 Fe(II)-[cytochrome c] + O2 + 8 H(+)(in) = 4 Fe(III)-[cytochrome c] + 2 H2O + 4 H(+)(out). Component of the cytochrome c oxidase, the last enzyme in the mitochondrial electron transport chain which drives oxidative phosphorylation. The respiratory chain contains 3 multisubunit complexes succinate dehydrogenase (complex II, CII), ubiquinol-cytochrome c oxidoreductase (cytochrome b-c1 complex, complex III, CIII) and cytochrome c oxidase (complex IV, CIV), that cooperate to transfer electrons derived from NADH and succinate to molecular oxygen, creating an electrochemical gradient over the inner membrane that drives transmembrane transport and the ATP synthase. Cytochrome c oxidase is the component of the respiratory chain that catalyzes the reduction of oxygen to water. Electrons originating from reduced cytochrome c in the intermembrane space (IMS) are transferred via the dinuclear copper A center (CU(A)) of subunit 2 and heme A of subunit 1 to the active site in subunit 1, a binuclear center (BNC) formed by heme A3 and copper B (CU(B)). The BNC reduces molecular oxygen to 2 water molecules using 4 electrons from cytochrome c in the IMS and 4 protons from the mitochondrial matrix. This is Cytochrome c oxidase subunit 3 (COIII) from Strongylocentrotus purpuratus (Purple sea urchin).